Consider the following 125-residue polypeptide: Small ribosomal subunit protein uS12 (125 aa).

Residue D89 is modified to 3-methylthioaspartic acid. The interval 104–125 (LQGVKDRKQSRSKYGSKRPKKA) is disordered. Basic residues predominate over residues 113-125 (SRSKYGSKRPKKA).

The protein belongs to the universal ribosomal protein uS12 family. As to quaternary structure, part of the 30S ribosomal subunit. Contacts proteins S8 and S17. May interact with IF1 in the 30S initiation complex.

Its function is as follows. With S4 and S5 plays an important role in translational accuracy. In terms of biological role, interacts with and stabilizes bases of the 16S rRNA that are involved in tRNA selection in the A site and with the mRNA backbone. Located at the interface of the 30S and 50S subunits, it traverses the body of the 30S subunit contacting proteins on the other side and probably holding the rRNA structure together. The combined cluster of proteins S8, S12 and S17 appears to hold together the shoulder and platform of the 30S subunit. In Leptothrix cholodnii (strain ATCC 51168 / LMG 8142 / SP-6) (Leptothrix discophora (strain SP-6)), this protein is Small ribosomal subunit protein uS12.